A 357-amino-acid chain; its full sequence is Protein RecA (357 aa).

67 to 74 (GPESSGKT) is a binding site for ATP. Residues 335 to 357 (LASSASDDESTEGNIDLETGEIF) are disordered.

It belongs to the RecA family.

It localises to the cytoplasm. Functionally, can catalyze the hydrolysis of ATP in the presence of single-stranded DNA, the ATP-dependent uptake of single-stranded DNA by duplex DNA, and the ATP-dependent hybridization of homologous single-stranded DNAs. It interacts with LexA causing its activation and leading to its autocatalytic cleavage. The chain is Protein RecA from Shewanella putrefaciens (strain CN-32 / ATCC BAA-453).